Here is a 236-residue protein sequence, read N- to C-terminus: Orotidine 5'-phosphate decarboxylase (236 aa).

Residues Asp13, Lys35, Asp62 to Thr71, Thr123, Arg184, Gln193, Gly213, and Arg214 each bind substrate. Lys64 serves as the catalytic Proton donor.

This sequence belongs to the OMP decarboxylase family. Type 1 subfamily. Homodimer.

It catalyses the reaction orotidine 5'-phosphate + H(+) = UMP + CO2. The protein operates within pyrimidine metabolism; UMP biosynthesis via de novo pathway; UMP from orotate: step 2/2. Functionally, catalyzes the decarboxylation of orotidine 5'-monophosphate (OMP) to uridine 5'-monophosphate (UMP). The chain is Orotidine 5'-phosphate decarboxylase from Coxiella burnetii (strain CbuK_Q154) (Coxiella burnetii (strain Q154)).